The sequence spans 878 residues: AP-5 complex subunit beta-1 (878 aa).

Residues 234-260 form a disordered region; that stretch reads RLQPQAPSWPAAEEGEGERSLTAREHS. The segment covering 250 to 260 has biased composition (basic and acidic residues); that stretch reads GERSLTAREHS.

Probably part of the adaptor protein complex 5 (AP-5), a tetramer composed of AP5B1, AP5M1, AP5S1 and AP5Z1. Interacts with ZFYVE26 and SPG11.

Its function is as follows. As part of AP-5, a probable fifth adaptor protein complex it may be involved in endosomal transport. In Homo sapiens (Human), this protein is AP-5 complex subunit beta-1 (AP5B1).